Here is a 158-residue protein sequence, read N- to C-terminus: Protein OPG060 (158 aa).

The protein belongs to the orthopoxvirus OPG058 family.

This is Protein OPG060 (OPG060) from Homo sapiens (Human).